The following is a 154-amino-acid chain: SsrA-binding protein (154 aa).

The disordered stretch occupies residues 134–154; the sequence is KRQAIKERQTQREIQRELKER.

The protein belongs to the SmpB family.

It is found in the cytoplasm. Functionally, required for rescue of stalled ribosomes mediated by trans-translation. Binds to transfer-messenger RNA (tmRNA), required for stable association of tmRNA with ribosomes. tmRNA and SmpB together mimic tRNA shape, replacing the anticodon stem-loop with SmpB. tmRNA is encoded by the ssrA gene; the 2 termini fold to resemble tRNA(Ala) and it encodes a 'tag peptide', a short internal open reading frame. During trans-translation Ala-aminoacylated tmRNA acts like a tRNA, entering the A-site of stalled ribosomes, displacing the stalled mRNA. The ribosome then switches to translate the ORF on the tmRNA; the nascent peptide is terminated with the 'tag peptide' encoded by the tmRNA and targeted for degradation. The ribosome is freed to recommence translation, which seems to be the essential function of trans-translation. This is SsrA-binding protein from Synechococcus sp. (strain JA-2-3B'a(2-13)) (Cyanobacteria bacterium Yellowstone B-Prime).